A 604-amino-acid polypeptide reads, in one-letter code: MSFSGEMANGKTDVANSGFSSSPEDMSGAEEGKENSSGIEVEASDVSLSLTGDETGTTQAESRDTCSETSGEDKDSDSMDDTGHYSINDENRGNDQSHSEDEEEEEEEEEDEEEEEAVRHRKRAQRKRANRDQDSSDEERALEDWVLSEKTPLPRPRWRALRALRQRQMGSSTRFIYDACGARGFVQRFRLLHGLDGHSGCVNTLHFNQRGTWLASGSDDLKVVVWDWVRRKPVLEFESGHKSNVFQAKFLPNSGDSTLAMCARDGQVRVAELSATHCCKNTKRVAQHKGASHKLALERDSPCTFLSAGEDAVVFTIDLRQDRPASRLVVTKEKEKKVGLYTIYVNPANTYQFAVGGRDQFVRIYDQRKINENVNNGVLKKFCPHHLVTSEAKANITCLVYSHDGSELLASYNDEDIYLFNSSHSDGAEYIKRYKGHRNNATVKGVNFYGPRSEFVVSGSDCGHIFLWEKSSCQIVQFMDGDKGGVVNCLEPHPHLPVLATSGLDYDVKIWLPTAKEPTELNGLKEVIKKNKRERDEDSLHHTDLFDNHMLWFLMHHLRQRGQRRRRRDAGLGAGDADSDDSPSSSDSSDDDEDGPDRVQCIPS.

The tract at residues 1-141 is disordered; sequence MSFSGEMANG…DQDSSDEERA (141 aa). Polar residues-rich tracts occupy residues 14–24 and 46–60; these read VANSGFSSSPE and VSLS…TTQA. The short motif at 39–50 is the Nuclear export signal element; that stretch reads IEVEASDVSLSL. A compositionally biased stretch (basic and acidic residues) spans 61–99; it reads ESRDTCSETSGEDKDSDSMDDTGHYSINDENRGNDQSHS. The segment covering 100–116 has biased composition (acidic residues); sequence EDEEEEEEEEEDEEEEE. Residues 119–129 are compositionally biased toward basic residues; that stretch reads RHRKRAQRKRA. Over residues 130–141 the composition is skewed to basic and acidic residues; it reads NRDQDSSDEERA. WD repeat units follow at residues 197 to 236, 240 to 281, 287 to 327, 335 to 375, 391 to 430, 438 to 478, and 482 to 522; these read GHSG…PVLE, GHKS…CCKN, QHKG…PASR, EKKV…ENVN, EAKA…GAEY, RNNA…IVQF, and DKGG…TELN. Residues 564–604 form a disordered region; it reads RRRRRDAGLGAGDADSDDSPSSSDSSDDDEDGPDRVQCIPS.

This sequence belongs to the WD repeat DCAF8 family.

Its subcellular location is the nucleus. It localises to the cytoplasm. The protein is DDB1- and CUL4-associated factor 8 (dcaf8) of Xenopus tropicalis (Western clawed frog).